We begin with the raw amino-acid sequence, 1472 residues long: Vacuolar cation-transporting ATPase YPK9 (1472 aa).

Met-1 carries the N-acetylmethionine modification. Composition is skewed to polar residues over residues Met-1–Gly-12 and Ser-72–Leu-87. 3 disordered regions span residues Met-1–Thr-32, His-71–Pro-115, and Ala-179–His-273. Topologically, residues Met-1 to Ala-293 are cytoplasmic. A Phosphothreonine modification is found at Thr-95. Low complexity-rich tracts occupy residues Ser-103–Pro-115 and Ser-211–Tyr-222. Residue Ser-108 is modified to Phosphoserine. Residues Ser-234–Glu-243 are compositionally biased toward acidic residues. A helical transmembrane segment spans residues Pro-294–Tyr-315. The Vacuolar segment spans residues Gln-316–Trp-321. Residues Tyr-322 to Pro-344 form a helical membrane-spanning segment. The Cytoplasmic segment spans residues His-345–Glu-488. The chain crosses the membrane as a helical span at residues Ile-489–Ile-511. The Vacuolar segment spans residues Asp-512–Tyr-514. Residues Tyr-515 to Leu-533 form a helical membrane-spanning segment. The Cytoplasmic segment spans residues Asn-534–Ser-693. Residues Phe-694–Val-713 traverse the membrane as a helical segment. Topologically, residues Gln-714–Ile-726 are vacuolar. The helical transmembrane segment at Leu-727 to Gly-748 threads the bilayer. The Cytoplasmic portion of the chain corresponds to Thr-749–Gln-1244. Catalysis depends on Asp-781, which acts as the 4-aspartylphosphate intermediate. A phosphoserine mark is found at Ser-1117 and Ser-1120. Residues Asp-1187 and Asp-1191 each coordinate Mg(2+). Residues Tyr-1245–Gly-1264 traverse the membrane as a helical segment. At Ser-1265–Gln-1271 the chain is on the vacuolar side. The helical transmembrane segment at Phe-1272–Trp-1289 threads the bilayer. The Cytoplasmic portion of the chain corresponds to Ser-1290–Ser-1307. The chain crosses the membrane as a helical span at residues Pro-1308–Ile-1331. At Val-1332–Ser-1351 the chain is on the vacuolar side. Residues Ser-1352–Val-1374 form a helical membrane-spanning segment. The Cytoplasmic segment spans residues Gly-1375 to Glu-1387. The helical transmembrane segment at Phe-1388 to Thr-1407 threads the bilayer. Residues Glu-1408–Ser-1423 lie on the Vacuolar side of the membrane. A helical transmembrane segment spans residues Phe-1424–Ile-1446. The Cytoplasmic portion of the chain corresponds to Lys-1447 to Val-1472.

The protein belongs to the cation transport ATPase (P-type) (TC 3.A.3) family. Type V subfamily.

It localises to the vacuole membrane. It carries out the reaction ATP + H2O = ADP + phosphate + H(+). Vacuolar transporter which plays a role in sequestration of divalent heavy metal ions. This chain is Vacuolar cation-transporting ATPase YPK9 (YPK9), found in Saccharomyces cerevisiae (strain ATCC 204508 / S288c) (Baker's yeast).